We begin with the raw amino-acid sequence, 50 residues long: U37-theraphotoxin-Cg1a (50 aa).

The N-terminal stretch at 1–19 (MRVLLIIAGLALLSVVCYT) is a signal peptide.

Belongs to the neurotoxin 10 (Hwtx-1) family. 67 (Jztx-67) subfamily. As to expression, expressed by the venom gland.

The protein localises to the secreted. The protein is U37-theraphotoxin-Cg1a of Chilobrachys guangxiensis (Chinese earth tiger tarantula).